A 210-amino-acid polypeptide reads, in one-letter code: Neuroendocrine protein 7B2 (210 aa).

The first 24 residues, M1–A24, serve as a signal peptide directing secretion. C118 and C128 form a disulfide bridge. Phosphoserine is present on residues S139 and S203.

It belongs to the 7B2 family. Interacts with PCSK2/PC2 early in the secretory pathway. Dissociation occurs at later stages. Post-translationally, proteolytically cleaved in the Golgi by a furin-like convertase to generate bioactive peptides. In terms of processing, sulfated on tyrosine residues.

It localises to the secreted. Acts as a molecular chaperone for PCSK2/PC2, preventing its premature activation in the regulated secretory pathway. Binds to inactive PCSK2 in the endoplasmic reticulum and facilitates its transport from there to later compartments of the secretory pathway where it is proteolytically matured and activated. Also required for cleavage of PCSK2 but does not appear to be involved in its folding. Plays a role in regulating pituitary hormone secretion. The C-terminal peptide inhibits PCSK2 in vitro. This Rattus norvegicus (Rat) protein is Neuroendocrine protein 7B2 (Scg5).